Here is a 217-residue protein sequence, read N- to C-terminus: Probable GTP-binding protein EngB (217 aa).

Positions 29-213 (GPLEVAFAGR…RQAIAETVGI (185 aa)) constitute an EngB-type G domain. GTP is bound by residues 37 to 44 (GRSNVGKS), 64 to 68 (GRTQE), 91 to 94 (DMPG), 158 to 161 (TKTD), and 192 to 194 (TSS). 2 residues coordinate Mg(2+): serine 44 and threonine 66.

It belongs to the TRAFAC class TrmE-Era-EngA-EngB-Septin-like GTPase superfamily. EngB GTPase family. Mg(2+) serves as cofactor.

Its function is as follows. Necessary for normal cell division and for the maintenance of normal septation. The chain is Probable GTP-binding protein EngB from Rhizobium johnstonii (strain DSM 114642 / LMG 32736 / 3841) (Rhizobium leguminosarum bv. viciae).